A 483-amino-acid chain; its full sequence is UDP-N-acetylmuramate--L-alanine ligase (483 aa).

122–128 provides a ligand contact to ATP; the sequence is GSHGKTT.

This sequence belongs to the MurCDEF family.

The protein resides in the cytoplasm. It catalyses the reaction UDP-N-acetyl-alpha-D-muramate + L-alanine + ATP = UDP-N-acetyl-alpha-D-muramoyl-L-alanine + ADP + phosphate + H(+). Its pathway is cell wall biogenesis; peptidoglycan biosynthesis. Functionally, cell wall formation. The protein is UDP-N-acetylmuramate--L-alanine ligase of Synechococcus sp. (strain CC9311).